Reading from the N-terminus, the 521-residue chain is Protein nucleotidyltransferase YdiU (521 aa).

ATP is bound by residues glycine 109, glycine 111, arginine 112, lysine 131, aspartate 143, glycine 144, arginine 194, and arginine 201. Aspartate 270 (proton acceptor) is an active-site residue. Mg(2+)-binding residues include asparagine 271 and aspartate 280. ATP is bound at residue aspartate 280.

The protein belongs to the SELO family. Mg(2+) serves as cofactor. Requires Mn(2+) as cofactor.

It catalyses the reaction L-seryl-[protein] + ATP = 3-O-(5'-adenylyl)-L-seryl-[protein] + diphosphate. The enzyme catalyses L-threonyl-[protein] + ATP = 3-O-(5'-adenylyl)-L-threonyl-[protein] + diphosphate. It carries out the reaction L-tyrosyl-[protein] + ATP = O-(5'-adenylyl)-L-tyrosyl-[protein] + diphosphate. The catalysed reaction is L-histidyl-[protein] + UTP = N(tele)-(5'-uridylyl)-L-histidyl-[protein] + diphosphate. It catalyses the reaction L-seryl-[protein] + UTP = O-(5'-uridylyl)-L-seryl-[protein] + diphosphate. The enzyme catalyses L-tyrosyl-[protein] + UTP = O-(5'-uridylyl)-L-tyrosyl-[protein] + diphosphate. Functionally, nucleotidyltransferase involved in the post-translational modification of proteins. It can catalyze the addition of adenosine monophosphate (AMP) or uridine monophosphate (UMP) to a protein, resulting in modifications known as AMPylation and UMPylation. The chain is Protein nucleotidyltransferase YdiU from Burkholderia thailandensis (strain ATCC 700388 / DSM 13276 / CCUG 48851 / CIP 106301 / E264).